The chain runs to 604 residues: MLARALLLCAALALGQAANPCCSNPCQNRGECLSVGFDRYKCDCTRTGYYGENCTTPEFLTRIKLLLKPTPNTVHYILTHFKGVWNIVNNIPFLRNAIMIYVLTSRSHLIDSPPTYNAHYGYKSWEAFSNLSYYTRALPPVADDCPTPMGVKGKKELPDSNEVLEKVLLRRKFIPDPQGTNMMFAFFAQHFTHQFFKSDQKRGPAFTTGLAHGVDLSHIYGETLDRQHKLRLFKDGKMKYQIIDGEMYPPTVKETQVEMMYPPYIPEHARFAVGQEVFGLVPGLMMYATIWLREHNRVCDVLKQEHPEWDDERLFQTSRLILIGETIKIVIEDYVQHLSGYHFKLKFDPELLFNQQFQYQNRIASEFNTLYHWHPLLPDTFQIDDQVYNFQQFLYNNSILVEHGLTQFVESFTKQIAGRVAGGRNVPLAVQRVAKASIEHSRKMKYQSLNEYRKRFLMKPYTSFEELTGEKEMAAGLEALYGDIDAMELYPALLVEKPRPDAIFGETMVEMGAPFSLKGLMGNPICSPHYWKPSTFGGEVGFQIVNTASIQSLICNNVKGCPVTAFNLPDPQLAKTVTINASASHSRLEDLSPTVLLKGRSTEL.

An N-terminal signal peptide occupies residues 1–17 (MLARALLLCAALALGQA). In terms of domain architecture, EGF-like spans 18–55 (ANPCCSNPCQNRGECLSVGFDRYKCDCTRTGYYGENCT). 4 disulfides stabilise this stretch: cysteine 21/cysteine 32, cysteine 22/cysteine 145, cysteine 26/cysteine 42, and cysteine 44/cysteine 54. Asparagine 53 is a glycosylation site (N-linked (GlcNAc...) asparagine). Arginine 106 is a substrate binding site. N-linked (GlcNAc...) asparagine glycosylation occurs at asparagine 130. Histidine 193 functions as the Proton acceptor in the catalytic mechanism. Position 341 (tyrosine 341) interacts with substrate. Catalysis depends on tyrosine 371, which acts as the For cyclooxygenase activity. Residue histidine 374 coordinates heme b. A glycan (N-linked (GlcNAc...) asparagine) is linked at asparagine 396. An S-nitrosocysteine modification is found at cysteine 526. An intrachain disulfide couples cysteine 555 to cysteine 561. N-linked (GlcNAc...) asparagine glycosylation is present at asparagine 580.

Belongs to the prostaglandin G/H synthase family. Homodimer. Heme b serves as cofactor. Post-translationally, S-nitrosylation by NOS2 (iNOS) activates enzyme activity. S-nitrosylation may take place on different Cys residues in addition to Cys-526.

Its subcellular location is the microsome membrane. The protein resides in the endoplasmic reticulum membrane. The protein localises to the nucleus inner membrane. It localises to the nucleus outer membrane. The enzyme catalyses (5Z,8Z,11Z,14Z)-eicosatetraenoate + AH2 + 2 O2 = prostaglandin H2 + A + H2O. The catalysed reaction is (5Z,8Z,11Z,14Z)-eicosatetraenoate + 2 O2 = prostaglandin G2. It catalyses the reaction prostaglandin G2 + AH2 = prostaglandin H2 + A + H2O. It carries out the reaction (5Z,8Z,11Z,14Z,17Z)-eicosapentaenoate + 2 O2 = prostaglandin G3. The enzyme catalyses prostaglandin G3 + AH2 = prostaglandin H3 + A + H2O. The catalysed reaction is (8Z,11Z,14Z)-eicosatrienoate + 2 O2 = prostaglandin G1. It catalyses the reaction prostaglandin G1 + AH2 = prostaglandin H1 + A + H2O. It carries out the reaction 2-(5Z,8Z,11Z,14Z)-eicosatetraenoyl-sn-glycero-3-phosphoethanolamine + 2 O2 = 2-(prostaglandin G2)-sn-glycero-3-phosphoethanolamine. The enzyme catalyses 2-(prostaglandin G2)-sn-glycero-3-phosphoethanolamine + AH2 = 2-(prostaglandin H2)-sn-glycero-3-phosphoethanolamine + A + H2O. The catalysed reaction is 2-(5Z,8Z,11Z,14Z)-eicosatetraenoyl-sn-glycero-3-phosphocholine + 2 O2 = 2-(prostaglandin G2)-sn-glycero-3-phosphocholine. It catalyses the reaction 2-(prostaglandin G2)-sn-glycero-3-phosphocholine + AH2 = 2-(prostaglandin H2)-sn-glycero-3-phosphocholine + A + H2O. It carries out the reaction (15S)-hydroperoxy-(5Z,8Z,11Z,13E)-eicosatetraenoate + AH2 = (15S)-hydroxy-(5Z,8Z,11Z,13E)-eicosatetraenoate + A + H2O. The enzyme catalyses 2-(5Z,8Z,11Z,14Z)-eicosatetraenoyl-sn-glycero-3-phosphocholine + AH2 + O2 = 2-[(15S)-hydroxy-(5Z,8Z,11Z,13E)-eicosatetraenoyl]-sn-glycero-3-phosphocholine + A + H2O. The catalysed reaction is 2-(5Z,8Z,11Z,14Z)-eicosatetraenoyl-sn-glycero-3-phosphocholine + AH2 + O2 = 2-[(15R)-hydroxy-(5Z,8Z,11Z,13E)-eicosatetraenoyl]-sn-glycero-3-phosphocholine + A + H2O. It catalyses the reaction 2-(5Z,8Z,11Z,14Z)-eicosatetraenoyl-sn-glycero-3-phosphocholine + AH2 + O2 = 2-[(11R)-hydroxy-(5Z,8Z,12E,14Z)-eicosatetraenoyl]-sn-glycero-3-phosphocholine + A + H2O. It carries out the reaction (9Z,12Z)-octadecadienoate + AH2 + O2 = 9-hydroxy-(10E,12Z)-octadecadienoate + A + H2O. The enzyme catalyses (9Z,12Z)-octadecadienoate + AH2 + O2 = 13-hydroxy-(9Z,11E)-octadecadienoate + A + H2O. The catalysed reaction is (5Z,8Z,11Z,14Z)-eicosatetraenoate + AH2 + O2 = (15R)-hydroxy-(5Z,8Z,11Z,13E)-eicosatetraenoate + A + H2O. It catalyses the reaction (5Z,8Z,11Z,14Z)-eicosatetraenoate + AH2 + O2 = (11R)-hydroxy-(5Z,8Z,12E,14Z)-eicosatetraenoate + A + H2O. It carries out the reaction (5Z,8Z,11Z,14Z,17Z)-eicosapentaenoate + AH2 + O2 = (11R)-hydroxy-(5Z,8Z,12E,14Z,17Z)-eicosapentaenoate + A + H2O. The enzyme catalyses (5Z,8Z,11Z,14Z,17Z)-eicosapentaenoate + AH2 + O2 = (18S)-hydroxy-(5Z,8Z,11Z,14Z,16E)-eicosapentaenoate + A + H2O. The catalysed reaction is (5Z,8Z,11Z,14Z,17Z)-eicosapentaenoate + AH2 + O2 = (18R)-hydroxy-(5Z,8Z,11Z,14Z,16E)-eicosapentaenoate + A + H2O. It catalyses the reaction (5Z,8Z,11Z,14Z,17Z)-eicosapentaenoate + AH2 + O2 = (15R)-hydroxy-(5Z,8Z,11Z,13E,17Z)-eicosapentaenoate + A + H2O. It carries out the reaction (5Z,8Z,11Z,14Z,17Z)-eicosapentaenoate + AH2 + O2 = (15S)-hydroxy-(5Z,8Z,11Z,13E,17Z)-eicosapentaenoate + A + H2O. The enzyme catalyses (7Z,10Z,13Z,16Z,19Z)-docosapentaenoate + AH2 + O2 = 13R-hydroxy-(7Z,10Z,14E,16Z,19Z)-docosapentaenoate + A + H2O. The catalysed reaction is (4Z,7Z,10Z,13Z,16Z,19Z)-docosahexaenoate + AH2 + O2 = 13-hydroxy-(4Z,7Z,10Z,14E,16Z,19Z)-docosahexaenoate + A + H2O. It catalyses the reaction (5S)-hydroxy-(6E,8Z,11Z,14Z)-eicosatetraenoate + AH2 + O2 = (5S,15R)-dihydroxy-(6E,8Z,11Z,13E)-eicosatetraenoate + A + H2O. It carries out the reaction (4Z,7Z,10Z,13Z,16Z,19Z)-docosahexaenoate + AH2 + O2 = 17R-hydroxy-(4Z,7Z,10Z,13Z,15E,19Z)-docosahexaenoate + A + H2O. The enzyme catalyses (5S)-hydroxy-(6E,8Z,11Z,14Z)-eicosatetraenoate + AH2 + O2 = (5S,15S)-dihydroxy-(6E,8Z,11Z,13E)-eicosatetraenoate + A + H2O. The catalysed reaction is (5S)-hydroxy-(6E,8Z,11Z,14Z)-eicosatetraenoate + AH2 + O2 = (5S,11R)-dihydroxy-(6E,8Z,12E,14Z)-eicosatetraenoate + A + H2O. It catalyses the reaction 2-(5Z,8Z,11Z,14Z-eicosatetraenoyl)-glycerol + 2 O2 = 2-glyceryl-prostaglandin G2. It carries out the reaction 2-glyceryl-prostaglandin G2 + AH2 = 2-glyceryl-prostaglandin H2 + A + H2O. The enzyme catalyses (5Z,8Z,11Z,14Z)-eicosatetraenoate + O2 = (15R)-hydroperoxy-(5Z,8Z,11Z,13E)-eicosatetraenoate. The catalysed reaction is (5Z,8Z,11Z,14Z)-eicosatetraenoate + O2 = 11R-hydroperoxy-(5Z,8Z,12E,14Z)-eicosatetraenoate. It catalyses the reaction (9Z,12Z)-octadecadienoate + AH2 + O2 = (9R)-hydroxy-(10E,12Z)-octadecadienoate + A + H2O. It carries out the reaction (9Z,12Z)-octadecadienoate + AH2 + O2 = (9S)-hydroxy-(10E,12Z)-octadecadienoate + A + H2O. The enzyme catalyses (9Z,12Z)-octadecadienoate + AH2 + O2 = (13S)-hydroxy-(9Z,11E)-octadecadienoate + A + H2O. The catalysed reaction is (9Z,12Z)-octadecadienoate + AH2 + O2 = (13R)-hydroxy-(9Z,11E)-octadecadienoate + A + H2O. The protein operates within lipid metabolism; prostaglandin biosynthesis. Functionally, dual cyclooxygenase and peroxidase in the biosynthesis pathway of prostanoids, a class of C20 oxylipins mainly derived from arachidonate ((5Z,8Z,11Z,14Z)-eicosatetraenoate, AA, C20:4(n-6)), with a particular role in the inflammatory response. The cyclooxygenase activity oxygenates AA to the hydroperoxy endoperoxide prostaglandin G2 (PGG2), and the peroxidase activity reduces PGG2 to the hydroxy endoperoxide prostaglandin H2 (PGH2), the precursor of all 2-series prostaglandins and thromboxanes. This complex transformation is initiated by abstraction of hydrogen at carbon 13 (with S-stereochemistry), followed by insertion of molecular O2 to form the endoperoxide bridge between carbon 9 and 11 that defines prostaglandins. The insertion of a second molecule of O2 (bis-oxygenase activity) yields a hydroperoxy group in PGG2 that is then reduced to PGH2 by two electrons. Similarly catalyzes successive cyclooxygenation and peroxidation of dihomo-gamma-linoleate (DGLA, C20:3(n-6)) and eicosapentaenoate (EPA, C20:5(n-3)) to corresponding PGH1 and PGH3, the precursors of 1- and 3-series prostaglandins. In an alternative pathway of prostanoid biosynthesis, converts 2-arachidonoyl lysophopholipids to prostanoid lysophopholipids, which are then hydrolyzed by intracellular phospholipases to release free prostanoids. Metabolizes 2-arachidonoyl glycerol yielding the glyceryl ester of PGH2, a process that can contribute to pain response. Generates lipid mediators from n-3 and n-6 polyunsaturated fatty acids (PUFAs) via a lipoxygenase-type mechanism. Oxygenates PUFAs to hydroperoxy compounds and then reduces them to corresponding alcohols. Plays a role in the generation of resolution phase interaction products (resolvins) during both sterile and infectious inflammation. Metabolizes docosahexaenoate (DHA, C22:6(n-3)) to 17R-HDHA, a precursor of the D-series resolvins (RvDs). As a component of the biosynthetic pathway of E-series resolvins (RvEs), converts eicosapentaenoate (EPA, C20:5(n-3)) primarily to 18S-HEPE that is further metabolized by ALOX5 and LTA4H to generate 18S-RvE1 and 18S-RvE2. In vascular endothelial cells, converts docosapentaenoate (DPA, C22:5(n-3)) to 13R-HDPA, a precursor for 13-series resolvins (RvTs) shown to activate macrophage phagocytosis during bacterial infection. In activated leukocytes, contributes to oxygenation of hydroxyeicosatetraenoates (HETE) to diHETES (5,15-diHETE and 5,11-diHETE). Can also use linoleate (LA, (9Z,12Z)-octadecadienoate, C18:2(n-6)) as substrate and produce hydroxyoctadecadienoates (HODEs) in a regio- and stereospecific manner, being (9R)-HODE ((9R)-hydroxy-(10E,12Z)-octadecadienoate) and (13S)-HODE ((13S)-hydroxy-(9Z,11E)-octadecadienoate) its major products. During neuroinflammation, plays a role in neuronal secretion of specialized preresolving mediators (SPMs) 15R-lipoxin A4 that regulates phagocytic microglia. The polypeptide is Prostaglandin G/H synthase 2 (PTGS2) (Cavia porcellus (Guinea pig)).